The following is a 277-amino-acid chain: Soluble NSF attachment protein 29 (277 aa).

Basic and acidic residues predominate over residues 1 to 11 (MSRNPFDDDYR). 3 disordered regions span residues 1 to 30 (MSRNPFDDDYRPSAASSTMPVKSYTTMGHY), 49 to 73 (ESLDSTERSRRHLENSEKIGTSTAQ), and 117 to 170 (KFTK…ESSR). Over residues 14 to 28 (AASSTMPVKSYTTMG) the composition is skewed to polar residues. The t-SNARE coiled-coil homology 1 domain occupies 44 to 106 (EKTLQESLDS…QMTQRNLNSL (63 aa)). The span at 49–65 (ESLDSTERSRRHLENSE) shows a compositional bias: basic and acidic residues. Over residues 134-170 (SKSASRLSETATNLSSGGGSATFSGPSGQRTLTESSR) the composition is skewed to polar residues. In terms of domain architecture, t-SNARE coiled-coil homology 2 spans 179-241 (EAMDNQIDEN…RDQDKQMQKI (63 aa)).

This sequence belongs to the SNAP-25 family.

Its subcellular location is the synapse. It localises to the synaptosome. Its function is as follows. SNAREs, soluble N-ethylmaleimide-sensitive factor-attachment protein receptors, are essential proteins for fusion of cellular membranes. SNAREs localized on opposing membranes assemble to form a trans-SNARE complex, an extended, parallel four alpha-helical bundle that drives membrane fusion. Plays a role in the processing and secretion of the aspartic protease hrg-7 from the intestine. In Caenorhabditis elegans, this protein is Soluble NSF attachment protein 29.